The following is a 596-amino-acid chain: (E)-beta-ocimene synthase, chloroplastic (596 aa).

A chloroplast-targeting transit peptide spans 1 to 35; that stretch reads MAITHYQMASFQSSFHFCMLRKTLRQKSSLHFAKR. (2E)-geranyl diphosphate-binding residues include Arg307, Asp344, Asp348, Arg485, and Asn488. Asp344 and Asp348 together coordinate Mg(2+). Positions 344 to 348 match the DDXXD motif motif; it reads DDIYD. Mg(2+) is bound by residues Asn488, Ala492, and Glu496.

Belongs to the terpene synthase family. Tpsb subfamily. The cofactor is Mg(2+). Requires Mn(2+) as cofactor. In terms of tissue distribution, highly expressed in leaves, stems and disk florets. Detected in roots.

It localises to the plastid. The protein resides in the chloroplast. It carries out the reaction (2E)-geranyl diphosphate = (E)-beta-ocimene + diphosphate. Its pathway is secondary metabolite biosynthesis; terpenoid biosynthesis. Functionally, monoterpene synthase involved in the biosynthesis of (E)-beta-ocimene as the major product and trace amounts of (Z)-beta-ocimene. Can only accept geranyl diphosphate as substrate. The polypeptide is (E)-beta-ocimene synthase, chloroplastic (Matricaria chamomilla var. recutita (German chamomile)).